The following is a 293-amino-acid chain: Undecaprenyl-diphosphatase (293 aa).

7 helical membrane passes run 3-23, 43-63, 85-105, 109-129, 203-223, 238-258, and 269-289; these read IALA…EFLP, KGKI…CWEF, INVI…GKAI, LFNP…ILWA, VATE…TVYE, IFAV…RWLL, and FAWY…THLI.

Belongs to the UppP family.

It is found in the cell inner membrane. It catalyses the reaction di-trans,octa-cis-undecaprenyl diphosphate + H2O = di-trans,octa-cis-undecaprenyl phosphate + phosphate + H(+). In terms of biological role, catalyzes the dephosphorylation of undecaprenyl diphosphate (UPP). Confers resistance to bacitracin. This Ralstonia pickettii (strain 12J) protein is Undecaprenyl-diphosphatase.